The chain runs to 355 residues: UDP-N-acetylglucosamine--N-acetylmuramyl-(pentapeptide) pyrophosphoryl-undecaprenol N-acetylglucosamine transferase (355 aa).

UDP-N-acetyl-alpha-D-glucosamine is bound by residues 15-17 (TGG), N127, R163, S191, I244, 263-268 (ALTVSE), and Q288.

It belongs to the glycosyltransferase 28 family. MurG subfamily.

The protein localises to the cell inner membrane. The catalysed reaction is di-trans,octa-cis-undecaprenyl diphospho-N-acetyl-alpha-D-muramoyl-L-alanyl-D-glutamyl-meso-2,6-diaminopimeloyl-D-alanyl-D-alanine + UDP-N-acetyl-alpha-D-glucosamine = di-trans,octa-cis-undecaprenyl diphospho-[N-acetyl-alpha-D-glucosaminyl-(1-&gt;4)]-N-acetyl-alpha-D-muramoyl-L-alanyl-D-glutamyl-meso-2,6-diaminopimeloyl-D-alanyl-D-alanine + UDP + H(+). The protein operates within cell wall biogenesis; peptidoglycan biosynthesis. Functionally, cell wall formation. Catalyzes the transfer of a GlcNAc subunit on undecaprenyl-pyrophosphoryl-MurNAc-pentapeptide (lipid intermediate I) to form undecaprenyl-pyrophosphoryl-MurNAc-(pentapeptide)GlcNAc (lipid intermediate II). The sequence is that of UDP-N-acetylglucosamine--N-acetylmuramyl-(pentapeptide) pyrophosphoryl-undecaprenol N-acetylglucosamine transferase from Sodalis glossinidius (strain morsitans).